The chain runs to 147 residues: Small ribosomal subunit protein uS12 (147 aa).

This sequence belongs to the universal ribosomal protein uS12 family. As to quaternary structure, part of the 30S ribosomal subunit.

In terms of biological role, with S4 and S5 plays an important role in translational accuracy. Located at the interface of the 30S and 50S subunits. This Hyperthermus butylicus (strain DSM 5456 / JCM 9403 / PLM1-5) protein is Small ribosomal subunit protein uS12.